We begin with the raw amino-acid sequence, 276 residues long: Syntaxin-12 (276 aa).

Serine 2 bears the N-acetylserine mark. Over 2-248 the chain is Cytoplasmic; the sequence is SYGPLDMYRN…RAAYYQKKSR (247 aa). The stretch at 33–131 forms a coiled coil; the sequence is IQRISQATAQ…RRVSEKEKES (99 aa). 4 positions are modified to phosphoserine: serine 139, serine 142, serine 218, and serine 225. In terms of domain architecture, t-SNARE coiled-coil homology spans 178–240; sequence LELIKERETA…ERATEQLQRA (63 aa). Residues 249–269 form a helical; Anchor for type IV membrane protein membrane-spanning segment; sequence KKMCILVLVLSVIIVILGLII. Over 270–276 the chain is Vesicular; sequence WLVYKTK.

This sequence belongs to the syntaxin family. In terms of assembly, associates with the BLOC-1 complex. Interacts with BLOC1S6. Interacts with NAPA and SNAP23. Identified in a complex containing STX6, STX12, VAMP4 and VTI1A. Interacts with GRIPAP1. Forms a complex with GRIP1, GRIA2 and NSG1; controls the intracellular fate of AMPAR and the endosomal sorting of the GRIA2 subunit toward recycling and membrane targeting. Interacts with NSG1. Interacts with TPC1. Interacts (via N-terminus) with VPS13B.

The protein localises to the endosome membrane. It is found in the golgi apparatus membrane. Its subcellular location is the endomembrane system. The protein resides in the early endosome membrane. It localises to the recycling endosome membrane. In terms of biological role, SNARE promoting fusion of transport vesicles with target membranes. Together with SNARE STX6, promotes movement of vesicles from endosomes to the cell membrane, and may therefore function in the endocytic recycling pathway. Through complex formation with GRIP1, GRIA2 and NSG1 controls the intracellular fate of AMPAR and the endosomal sorting of the GRIA2 subunit toward recycling and membrane targeting. The protein is Syntaxin-12 (STX12) of Pongo abelii (Sumatran orangutan).